Here is a 483-residue protein sequence, read N- to C-terminus: Betaine aldehyde dehydrogenase (483 aa).

K(+)-binding residues include Ile-27 and Asp-93. 149–151 (GAW) lines the NAD(+) pocket. Residue Lys-161 is the Charge relay system of the active site. Position 175 to 178 (175 to 178 (KPSE)) interacts with NAD(+). Val-179 is a K(+) binding site. 228–231 (SVPT) is an NAD(+) binding site. Val-243 serves as a coordination point for K(+). Glu-249 acts as the Proton acceptor in catalysis. 3 residues coordinate NAD(+): Gly-251, Cys-283, and Glu-380. Residue Cys-283 is the Nucleophile of the active site. Residue Cys-283 is modified to Cysteine sulfenic acid (-SOH). Positions 450 and 453 each coordinate K(+). Residue Glu-457 is the Charge relay system of the active site.

Belongs to the aldehyde dehydrogenase family. As to quaternary structure, dimer of dimers. K(+) is required as a cofactor.

The enzyme catalyses betaine aldehyde + NAD(+) + H2O = glycine betaine + NADH + 2 H(+). The protein operates within amine and polyamine biosynthesis; betaine biosynthesis via choline pathway; betaine from betaine aldehyde: step 1/1. In terms of biological role, involved in the biosynthesis of the osmoprotectant glycine betaine. Catalyzes the irreversible oxidation of betaine aldehyde to the corresponding acid. The polypeptide is Betaine aldehyde dehydrogenase (Cereibacter sphaeroides (strain KD131 / KCTC 12085) (Rhodobacter sphaeroides)).